The chain runs to 98 residues: Cell cycle protein GpsB (98 aa).

A coiled-coil region spans residues 34–71; the sequence is LDLIIKDYEAFQQEIDELRQENARLKRQVEELQKRPAM.

This sequence belongs to the GpsB family. As to quaternary structure, forms polymers through the coiled coil domains. Interacts with PBP1, MreC and EzrA.

The protein localises to the cytoplasm. In terms of biological role, divisome component that associates with the complex late in its assembly, after the Z-ring is formed, and is dependent on DivIC and PBP2B for its recruitment to the divisome. Together with EzrA, is a key component of the system that regulates PBP1 localization during cell cycle progression. Its main role could be the removal of PBP1 from the cell pole after pole maturation is completed. Also contributes to the recruitment of PBP1 to the division complex. Not essential for septum formation. In Geobacillus kaustophilus (strain HTA426), this protein is Cell cycle protein GpsB.